The primary structure comprises 323 residues: Probable pectate lyase A (323 aa).

Residues 1–20 (MTNFKWIVAAAGLLSGQVLA) form the signal peptide. The N-linked (GlcNAc...) asparagine glycan is linked to N95. Positions 136, 165, and 169 each coordinate Ca(2+). R222 is a catalytic residue.

The protein belongs to the polysaccharide lyase 1 family. Ca(2+) is required as a cofactor.

The protein resides in the secreted. The enzyme catalyses Eliminative cleavage of (1-&gt;4)-alpha-D-galacturonan to give oligosaccharides with 4-deoxy-alpha-D-galact-4-enuronosyl groups at their non-reducing ends.. Functionally, pectinolytic enzyme consist of four classes of enzymes: pectin lyase, polygalacturonase, pectin methylesterase and rhamnogalacturonase. Among pectinolytic enzymes, pectin lyase is the most important in depolymerization of pectin, since it cleaves internal glycosidic bonds of highly methylated pectins. Favors pectate, the anion, over pectin, the methyl ester. The sequence is that of Probable pectate lyase A (plyA) from Aspergillus niger (strain ATCC MYA-4892 / CBS 513.88 / FGSC A1513).